A 67-amino-acid polypeptide reads, in one-letter code: DNA-directed RNA polymerase subunit omega (67 aa).

It belongs to the RNA polymerase subunit omega family. As to quaternary structure, the RNAP catalytic core consists of 2 alpha, 1 beta, 1 beta' and 1 omega subunit. When a sigma factor is associated with the core the holoenzyme is formed, which can initiate transcription.

The catalysed reaction is RNA(n) + a ribonucleoside 5'-triphosphate = RNA(n+1) + diphosphate. Its function is as follows. Promotes RNA polymerase assembly. Latches the N- and C-terminal regions of the beta' subunit thereby facilitating its interaction with the beta and alpha subunits. This Bordetella avium (strain 197N) protein is DNA-directed RNA polymerase subunit omega.